Here is a 550-residue protein sequence, read N- to C-terminus: Hydroxylamine reductase (550 aa).

The [2Fe-2S] cluster site is built by Cys3, Cys6, Cys18, and Cys25. Residues His249, Glu273, Cys317, Cys405, Cys433, Cys458, Glu492, and Lys494 each coordinate hybrid [4Fe-2O-2S] cluster. Cys405 is modified (cysteine persulfide).

Belongs to the HCP family. It depends on [2Fe-2S] cluster as a cofactor. Requires hybrid [4Fe-2O-2S] cluster as cofactor.

The protein resides in the cytoplasm. It catalyses the reaction A + NH4(+) + H2O = hydroxylamine + AH2 + H(+). Functionally, catalyzes the reduction of hydroxylamine to form NH(3) and H(2)O. The polypeptide is Hydroxylamine reductase (Salmonella gallinarum (strain 287/91 / NCTC 13346)).